The primary structure comprises 509 residues: MTVTISFEPYVGSSVDALSIPLYLRCQLVFKLSKPLAAVPLLESGVNRLVQALPFLSGEFTAVPASDGGKEILLVRPVLNFELSRILKIKYHETSLRHVCKQMNRPSSQGGDLPHEPYMPYPRLPDPSRPQPIVGFQVNVHTDGIILSVATHHCSFDATGMGSIVQNLAACCRSPPSDEPDLTTSPAQEAEARKVLSQVRETPFDPKMFPEYRPLDSMLSYYKGVQSALQGRQTTIVNRCFTIAADKINALKRRCNQLIPEMVKKYGLSTEDAIGSAWVSSNDVVAALLWTCINRARYPEIRERSVHQLPPDLLHATSSLGVPVNVRSRLSPPLPKSTLGNAVCLLREKVPLQFFALPSHANMEATSSVCADHSGDDEWALSFCRVAYGLRAKLNAIDDDYIRDYISYVQKSPCHLSVTLDTENLYLSNWREIGVYDADFGGMLGKPLRMRAPDGYTDGLIFVMAQRSEDKSAPWEFNISLEASTMKRIVHDPLWCKYVELDAFWHGEE.

The protein belongs to the fumigaclavine B O-acetyltransferase family. As to quaternary structure, monomer.

It catalyses the reaction (2R,3S,11R)-aszonalenin + acetyl-CoA = (2R,3S,11R)-acetylaszonalenin + CoA. It functions in the pathway alkaloid biosynthesis. O-acetyltransferase; part of the gene cluster that mediates the biosynthesis of the prenylated pyrroloindoline diketopiperazine acetylaszonalenin. The first step in the pathway is the formation of (R)-benzodiazepinedione by condensation of tryptophan and anthranilic acid catalyzed by the non-ribosomal peptide synthetase anaPS. The prenyltransferase anaPT then converts (R)-benzodiazepinedione to aszonalenin in the presence of dimethylallyl diphosphate (DMAPP) via C3-prenylation. The last step in the biosynthesis of acetylaszonalenin via acetylation of aszonalenin at position N1 catalyzed by anaAT. This is O-acetyltransferase anaAT from Neosartorya fischeri (strain ATCC 1020 / DSM 3700 / CBS 544.65 / FGSC A1164 / JCM 1740 / NRRL 181 / WB 181) (Aspergillus fischerianus).